Reading from the N-terminus, the 428-residue chain is Histidine--tRNA ligase (428 aa).

Belongs to the class-II aminoacyl-tRNA synthetase family. In terms of assembly, homodimer.

The protein resides in the cytoplasm. It catalyses the reaction tRNA(His) + L-histidine + ATP = L-histidyl-tRNA(His) + AMP + diphosphate + H(+). This chain is Histidine--tRNA ligase, found in Bordetella avium (strain 197N).